The chain runs to 354 residues: Uroporphyrinogen decarboxylase (354 aa).

Residues 27–31 (RQAGR), Asp-77, Tyr-153, Thr-208, and His-326 each bind substrate.

It belongs to the uroporphyrinogen decarboxylase family. Homodimer.

The protein resides in the cytoplasm. It carries out the reaction uroporphyrinogen III + 4 H(+) = coproporphyrinogen III + 4 CO2. It functions in the pathway porphyrin-containing compound metabolism; protoporphyrin-IX biosynthesis; coproporphyrinogen-III from 5-aminolevulinate: step 4/4. Its function is as follows. Catalyzes the decarboxylation of four acetate groups of uroporphyrinogen-III to yield coproporphyrinogen-III. This chain is Uroporphyrinogen decarboxylase, found in Neisseria gonorrhoeae (strain ATCC 700825 / FA 1090).